The following is a 154-amino-acid chain: Large-conductance mechanosensitive channel (154 aa).

The next 2 membrane-spanning stretches (helical) occupy residues 14-34 (VVDL…VNSL) and 86-106 (VFIN…FFVV).

This sequence belongs to the MscL family. In terms of assembly, homopentamer.

It is found in the cell membrane. Functionally, channel that opens in response to stretch forces in the membrane lipid bilayer. May participate in the regulation of osmotic pressure changes within the cell. The chain is Large-conductance mechanosensitive channel from Dehalococcoides mccartyi (strain CBDB1).